Consider the following 429-residue polypeptide: Hemoglobinase (429 aa).

The signal sequence occupies residues 1-19; that stretch reads MMLFSLFLISILHILLVKC. The propeptide occupies 20–31; that stretch reads QLDTNYEVSDET. Residue histidine 151 is part of the active site. The disordered stretch occupies residues 288 to 309; sequence FQGSRDKSSSENDEPPMKPRHS. Residues 292 to 429 constitute a propeptide that is removed on maturation; it reads RDKSSSENDE…INEAIIKICG (138 aa).

This sequence belongs to the peptidase C13 family.

The enzyme catalyses Hydrolysis of proteins and small molecule substrates at -Asn-|-Xaa- bonds.. Its function is as follows. This protease is used by the parasite for degradation of the host globin. The polypeptide is Hemoglobinase (Schistosoma mansoni (Blood fluke)).